Consider the following 359-residue polypeptide: C-X-C chemokine receptor type 4 (359 aa).

The tract at residues 1-23 (MEPISVSIYTSDNYSEEVGSGDY) is important for chemokine binding and signaling. Over 1 to 40 (MEPISVSIYTSDNYSEEVGSGDYDSNKEPCFRDENVHFNR) the chain is Extracellular. Y9 carries the sulfotyrosine modification. Residue N13 is glycosylated (N-linked (GlcNAc...) asparagine). The residue at position 14 (Y14) is a Sulfotyrosine. Residue S20 is glycosylated (O-linked (Xyl...) (chondroitin sulfate) serine). Sulfotyrosine is present on Y23. Disulfide bonds link C30–C281 and C111–C193. Residues 41–65 (IFLPTIYFIIFLTGIVGNGLVILVM) traverse the membrane as a helical segment. Residues 66-79 (GYQKKLRSMTDKYR) lie on the Cytoplasmic side of the membrane. The chain crosses the membrane as a helical span at residues 80-101 (LHLSVADLLFVITLPFWAVDAM). The chemokine binding stretch occupies residues 96–99 (WAVD). The Extracellular portion of the chain corresponds to 102 to 112 (ADWYFGKFLCK). A helical membrane pass occupies residues 113-132 (AVHIIYTVNLYSSVLILAFI). Positions 115–119 (HIIYT) are chemokine binding. Residues 133-156 (SLDRYLAIVHATNSQRPRKLLAEK) lie on the Cytoplasmic side of the membrane. The short motif at 135–137 (DRY) is the Important for signaling element. The segment at 137–149 (YLAIVHATNSQRP) is involved in dimerization; when bound to chemokine. Residues 157–176 (AVYVGVWIPALLLTIPDFIF) form a helical membrane-spanning segment. Over 177-202 (ADVSQGDISQGDDRYICDRLYPDSLW) the chain is Extracellular. The interval 193-197 (CDRLY) is chemokine binding, important for signaling. The tract at residues 198 to 217 (PDSLWMVVFQFQHIMVGLIL) is involved in dimerization. The helical transmembrane segment at 203–223 (MVVFQFQHIMVGLILPGIVIL) threads the bilayer. Residues 224 to 248 (SCYCIIISKLSHSKGHQKRKALKTT) lie on the Cytoplasmic side of the membrane. Residues 249–268 (VILILAFFACWLPYYVGISI) form a helical membrane-spanning segment. The Extracellular segment spans residues 269–289 (DSFILLGVIKQGCDFESIVHK). Positions 273–275 (LLG) are involved in dimerization. A helical membrane pass occupies residues 290–309 (WISITEALAFFHCCLNPILY). Residues 310 to 359 (AFLGAKFKSSAQHALNSMSRGSSLKILSKGKRGGHSSVSTESESSSFHSS) are Cytoplasmic-facing. Residues S326 and S328 each carry the phosphoserine modification. Residues S331 and S332 each carry the phosphoserine; by PKC and GRK6 modification. Residues 335–359 (ILSKGKRGGHSSVSTESESSSFHSS) form a disordered region. At S337 the chain carries Phosphoserine; by GRK6. K338 participates in a covalent cross-link: Glycyl lysine isopeptide (Lys-Gly) (interchain with G-Cter in ubiquitin). Low complexity predominate over residues 344 to 359 (HSSVSTESESSSFHSS). Residue S346 is modified to Phosphoserine; by GRK6. 2 positions are modified to phosphoserine: S355 and S358.

It belongs to the G-protein coupled receptor 1 family. In terms of assembly, monomer. Can form homodimers. Interacts with CD164. Interacts with ARRB2; the interaction is dependent on the C-terminal phosphorylation of CXCR4 and allows activation of MAPK1 and MAPK3. Interacts with ARR3; the interaction is dependent on the C-terminal phosphorylation of CXCR4 and modulates calcium mobilization. Interacts with RNF113A; the interaction, enhanced by CXCL12, promotes CXCR4 ubiquitination and subsequent degradation. Interacts (via the cytoplasmic C-terminal) with ITCH (via the WW domains I and II); the interaction, enhanced by CXCL12, promotes CXCR4 ubiquitination and leads to its degradation. Interacts with extracellular ubiquitin. Interacts with DBN1; this interaction is enhanced by antigenic stimulation. Following LPS binding, may form a complex with GDF5, HSP90AA1 and HSPA8. Phosphorylated on agonist stimulation. Rapidly phosphorylated on serine and threonine residues in the C-terminal. Phosphorylation at Ser-331 and Ser-332 leads to recruitment of ITCH, ubiquitination and protein degradation. In terms of processing, ubiquitinated after ligand binding, leading to its degradation. Ubiquitinated by ITCH at the cell membrane on agonist stimulation. The ubiquitin-dependent mechanism, endosomal sorting complex required for transport (ESCRT), then targets CXCR4 for lysosomal degradation. This process is dependent also on prior Ser-/Thr-phosphorylation in the C-terminal of CXCR4. Also binding of ARRB1 to STAM negatively regulates CXCR4 sorting to lysosomes though modulating ubiquitination of SFR5S. Post-translationally, sulfation is required for efficient binding of CXCL12/SDF-1alpha and promotes its dimerization. O- and N-glycosylated. N-glycosylation can mask coreceptor function. The O-glycosylation chondroitin sulfate attachment does not affect interaction with CXCL12/SDF-1alpha nor its coreceptor activity. As to expression, lymphocytes, macrophages, neutrophils, microglial cells and astrocytes. Found in spleen, thymus, bone marrow, lymph nodes and, at lower levels in brain, small intestine, stomach and kidney. CXCR4-A is predominant in all tissues tested. During embryonic development, high levels are detected in the endothelium of developing blood vessels and in many regions of the developing brain including the olfactory epithelium, olfactory bulb, hippocampus, cerebellum and spinal cord.

It localises to the cell membrane. It is found in the cell junction. Its subcellular location is the early endosome. The protein resides in the late endosome. The protein localises to the lysosome. Receptor for the C-X-C chemokine CXCL12/SDF-1 that transduces a signal by increasing intracellular calcium ion levels and enhancing MAPK1/MAPK3 activation. Involved in the AKT signaling cascade. Plays a role in regulation of cell migration, e.g. during wound healing. Acts as a receptor for extracellular ubiquitin; leading to enhanced intracellular calcium ions and reduced cellular cAMP levels. Binds bacterial lipopolysaccharide (LPS) et mediates LPS-induced inflammatory response, including TNF secretion by monocytes. Involved in hematopoiesis and in cardiac ventricular septum formation. Also plays an essential role in vascularization of the gastrointestinal tract, probably by regulating vascular branching and/or remodeling processes in endothelial cells. Involved in cerebellar development. In the CNS, could mediate hippocampal-neuron survival. This chain is C-X-C chemokine receptor type 4 (Cxcr4), found in Mus musculus (Mouse).